The primary structure comprises 274 residues: Proteasome subunit beta (274 aa).

The propeptide at 1-52 (MADPLGAAGRLPAVFMTPGTSSFADFLSRSAPHLLPGARSGLPGPVTEVAHG) is removed in mature form; by autocatalysis. Catalysis depends on Thr-53, which acts as the Nucleophile.

It belongs to the peptidase T1B family. As to quaternary structure, the 20S proteasome core is composed of 14 alpha and 14 beta subunits that assemble into four stacked heptameric rings, resulting in a barrel-shaped structure. The two inner rings, each composed of seven catalytic beta subunits, are sandwiched by two outer rings, each composed of seven alpha subunits. The catalytic chamber with the active sites is on the inside of the barrel. Has a gated structure, the ends of the cylinder being occluded by the N-termini of the alpha-subunits. Is capped by the proteasome-associated ATPase, ARC.

The protein localises to the cytoplasm. It catalyses the reaction Cleavage of peptide bonds with very broad specificity.. It participates in protein degradation; proteasomal Pup-dependent pathway. With respect to regulation, the formation of the proteasomal ATPase ARC-20S proteasome complex, likely via the docking of the C-termini of ARC into the intersubunit pockets in the alpha-rings, may trigger opening of the gate for substrate entry. Interconversion between the open-gate and close-gate conformations leads to a dynamic regulation of the 20S proteasome proteolysis activity. Its function is as follows. Component of the proteasome core, a large protease complex with broad specificity involved in protein degradation. The chain is Proteasome subunit beta from Frankia casuarinae (strain DSM 45818 / CECT 9043 / HFP020203 / CcI3).